The sequence spans 465 residues: Chromosomal replication initiator protein DnaA (465 aa).

The interval 1-72 (MRTKQLWQVA…ETLSLLLGRP (72 aa)) is domain I, interacts with DnaA modulators. The interval 72–117 (PIAVHFTVHGQDDEEHPVQRRPQRRALASEEGSASKQLSLTPSPEH) is domain II. The disordered stretch occupies residues 80–118 (HGQDDEEHPVQRRPQRRALASEEGSASKQLSLTPSPEHG). The segment covering 103 to 113 (GSASKQLSLTP) has biased composition (polar residues). Residues 118-334 (GLNPRYTFEK…GALNRIVALA (217 aa)) form a domain III, AAA+ region region. ATP contacts are provided by glycine 162, glycine 164, lysine 165, and threonine 166. The interval 335 to 465 (QLTHQPITLA…DAKAPLASRH (131 aa)) is domain IV, binds dsDNA.

This sequence belongs to the DnaA family. In terms of assembly, oligomerizes as a right-handed, spiral filament on DNA at oriC.

The protein resides in the cytoplasm. In terms of biological role, plays an essential role in the initiation and regulation of chromosomal replication. ATP-DnaA binds to the origin of replication (oriC) to initiate formation of the DNA replication initiation complex once per cell cycle. Binds the DnaA box (a 9 base pair repeat at the origin) and separates the double-stranded (ds)DNA. Forms a right-handed helical filament on oriC DNA; dsDNA binds to the exterior of the filament while single-stranded (ss)DNA is stabiized in the filament's interior. The ATP-DnaA-oriC complex binds and stabilizes one strand of the AT-rich DNA unwinding element (DUE), permitting loading of DNA polymerase. After initiation quickly degrades to an ADP-DnaA complex that is not apt for DNA replication. Binds acidic phospholipids. The sequence is that of Chromosomal replication initiator protein DnaA from Thermomicrobium roseum (strain ATCC 27502 / DSM 5159 / P-2).